The following is a 125-amino-acid chain: Calcitonin receptor-stimulating peptide 1 (125 aa).

Residues 1 to 25 (MGFWKFPPFLVLSILVLYQAGMFHA) form the signal peptide. The propeptide occupies 26-77 (APFRSVFDGRFDPATLDEEESRLLLAAMVNDYEQMRTRESEKAQKTEGSRIQ). C81 and C86 form a disulfide bridge.

It belongs to the calcitonin family.

It is found in the secreted. Functionally, stimulates cAMP production via the calcitonin receptor (CT) but not via the CT-like (CL) receptor. The chain is Calcitonin receptor-stimulating peptide 1 (CRSP1) from Ovis aries (Sheep).